The chain runs to 201 residues: Glycerol-3-phosphate acyltransferase (201 aa).

5 helical membrane passes run 10–30 (MLIG…GLIL), 60–80 (LAAA…LIAA), 86–106 (AAIA…WIGF), 116–136 (LGVL…AWIV), and 166–186 (ALAA…RANI).

Belongs to the PlsY family. In terms of assembly, probably interacts with PlsX.

The protein localises to the cell inner membrane. It catalyses the reaction an acyl phosphate + sn-glycerol 3-phosphate = a 1-acyl-sn-glycero-3-phosphate + phosphate. The protein operates within lipid metabolism; phospholipid metabolism. Functionally, catalyzes the transfer of an acyl group from acyl-phosphate (acyl-PO(4)) to glycerol-3-phosphate (G3P) to form lysophosphatidic acid (LPA). This enzyme utilizes acyl-phosphate as fatty acyl donor, but not acyl-CoA or acyl-ACP. The protein is Glycerol-3-phosphate acyltransferase of Brucella melitensis biotype 2 (strain ATCC 23457).